The chain runs to 143 residues: Large ribosomal subunit protein uL15 (143 aa).

Positions 1–54 are disordered; it reads MELNSIKPAEGAKHAKRRVGRGIGSGLGKTAGRGHKGQKSRSGGYHKVGFEGGQ. The segment covering 21-31 has biased composition (gly residues); it reads RGIGSGLGKTA.

It belongs to the universal ribosomal protein uL15 family. As to quaternary structure, part of the 50S ribosomal subunit.

In terms of biological role, binds to the 23S rRNA. The chain is Large ribosomal subunit protein uL15 from Paracidovorax citrulli (strain AAC00-1) (Acidovorax citrulli).